A 199-amino-acid polypeptide reads, in one-letter code: Holliday junction branch migration complex subunit RuvA (199 aa).

The domain I stretch occupies residues 1–64 (MIAFLKGAVF…ENEFKLFGFL (64 aa)). A domain II region spans residues 65-143 (DQDELRLFKT…ELKLVEVEKE (79 aa)). The flexible linker stretch occupies residues 144-148 (QRPLL). The domain III stretch occupies residues 148-199 (LDELMEALEILGYSRSEVLPAIMDLNRNKQLGNIVEENIKLVLKAKAQEMRR).

Belongs to the RuvA family. As to quaternary structure, homotetramer. Forms an RuvA(8)-RuvB(12)-Holliday junction (HJ) complex. HJ DNA is sandwiched between 2 RuvA tetramers; dsDNA enters through RuvA and exits via RuvB. An RuvB hexamer assembles on each DNA strand where it exits the tetramer. Each RuvB hexamer is contacted by two RuvA subunits (via domain III) on 2 adjacent RuvB subunits; this complex drives branch migration. In the full resolvosome a probable DNA-RuvA(4)-RuvB(12)-RuvC(2) complex forms which resolves the HJ.

It localises to the cytoplasm. The RuvA-RuvB-RuvC complex processes Holliday junction (HJ) DNA during genetic recombination and DNA repair, while the RuvA-RuvB complex plays an important role in the rescue of blocked DNA replication forks via replication fork reversal (RFR). RuvA specifically binds to HJ cruciform DNA, conferring on it an open structure. The RuvB hexamer acts as an ATP-dependent pump, pulling dsDNA into and through the RuvAB complex. HJ branch migration allows RuvC to scan DNA until it finds its consensus sequence, where it cleaves and resolves the cruciform DNA. This Syntrophomonas wolfei subsp. wolfei (strain DSM 2245B / Goettingen) protein is Holliday junction branch migration complex subunit RuvA.